Consider the following 383-residue polypeptide: Meiotically up-regulated gene 93 protein (383 aa).

The stretch at 75 to 108 (KKVIWRRGLAYLRLGHPHLANRDWEHSLELDPNN) is one TPR repeat.

Its subcellular location is the cytoplasm. The protein localises to the nucleus. Has a role in meiosis. The chain is Meiotically up-regulated gene 93 protein (mug93) from Schizosaccharomyces pombe (strain 972 / ATCC 24843) (Fission yeast).